Reading from the N-terminus, the 1086-residue chain is ATP-dependent helicase/deoxyribonuclease subunit B (1086 aa).

Belongs to the helicase family. AddB/RexB type 2 subfamily. As to quaternary structure, heterodimer of AddA and RexB. Requires Mg(2+) as cofactor.

Its function is as follows. The heterodimer acts as both an ATP-dependent DNA helicase and an ATP-dependent, dual-direction single-stranded exonuclease. Recognizes the chi site generating a DNA molecule suitable for the initiation of homologous recombination. This subunit has 5' -&gt; 3' nuclease activity but not helicase activity. This is ATP-dependent helicase/deoxyribonuclease subunit B from Streptococcus uberis (strain ATCC BAA-854 / 0140J).